The following is a 423-amino-acid chain: MSQRSSELFERAQQLIPGGVNSPVRACLGVDSEPLFIARAAGSRLHTVDGETFIDFVESWGPMLLGHTHPEVTAAVHAAVDRGTSYGAPCEDEVVLAAKVVDALPGVDMVRMVNSGTEATMSALRLARGYTGRTKLVKFVGCYHGHADPFLASAGSGVATLSIPGTPGVPESTVRDTLLAPYNDLAAVKDLFALHGKDIAAIIVEAVAGNMGLVPPKAGFLEGLRELCDQHGALLIFDEVITGFRVSFGGAQQRFGITPDLTTLGKIIGGGLPVGAYGGKREIMQRIAPCGEVYQAGTLSGNPLAMAAGIATLDVLSRSDYAGLEARVAAFVKELEAILKGKGVPVRINTLASMFTVFFTNDPVTDFASAKTADGALYTSFYKQMRAQGIYLAPSPFEAAMVSFAHTDDDLAAMLDAARKVTF.

Residue lysine 266 is modified to N6-(pyridoxal phosphate)lysine.

Belongs to the class-III pyridoxal-phosphate-dependent aminotransferase family. HemL subfamily. As to quaternary structure, homodimer. It depends on pyridoxal 5'-phosphate as a cofactor.

It is found in the cytoplasm. It catalyses the reaction (S)-4-amino-5-oxopentanoate = 5-aminolevulinate. The protein operates within porphyrin-containing compound metabolism; protoporphyrin-IX biosynthesis; 5-aminolevulinate from L-glutamyl-tRNA(Glu): step 2/2. This chain is Glutamate-1-semialdehyde 2,1-aminomutase, found in Nitratidesulfovibrio vulgaris (strain ATCC 29579 / DSM 644 / CCUG 34227 / NCIMB 8303 / VKM B-1760 / Hildenborough) (Desulfovibrio vulgaris).